A 332-amino-acid chain; its full sequence is MASTIAVLGAGAWGTALASVLGRNGHAVRLWTREAEHAAAINAERVNQRHLPDCPLPDSLTATADLETALGGTDWLLIAVPSSAFRGLIERLAPYRPGKVVWATKGLESESGGFLHDVVQAGLDPAPAMAVISGPSFAAEVGQGLPTAITVAADDADLAAEVVRAFHNDRFRPYSSTDMTGVELGGAVKNVLAVATGASDGLGLGANARAALVTRGLAEISRLGAALGADPQTLIGLAGMGDLLLTCTDDQSRNRRFGFALGQGATVETALASVGSTVEGARTAAELHSLAERHSVEMPICNMVYRVVSGDTPLEQAVRELMERTPKAEFDD.

Positions 13, 33, and 105 each coordinate NADPH. Residues K105, G134, and S136 each contribute to the sn-glycerol 3-phosphate site. Position 138 (A138) interacts with NADPH. Sn-glycerol 3-phosphate-binding residues include K189, D242, S252, R253, and N254. K189 acts as the Proton acceptor in catalysis. R253 is an NADPH binding site. E279 is a binding site for NADPH.

The protein belongs to the NAD-dependent glycerol-3-phosphate dehydrogenase family.

The protein localises to the cytoplasm. It carries out the reaction sn-glycerol 3-phosphate + NAD(+) = dihydroxyacetone phosphate + NADH + H(+). The enzyme catalyses sn-glycerol 3-phosphate + NADP(+) = dihydroxyacetone phosphate + NADPH + H(+). It functions in the pathway membrane lipid metabolism; glycerophospholipid metabolism. Functionally, catalyzes the reduction of the glycolytic intermediate dihydroxyacetone phosphate (DHAP) to sn-glycerol 3-phosphate (G3P), the key precursor for phospholipid synthesis. In Halorhodospira halophila (strain DSM 244 / SL1) (Ectothiorhodospira halophila (strain DSM 244 / SL1)), this protein is Glycerol-3-phosphate dehydrogenase [NAD(P)+].